Reading from the N-terminus, the 29-residue chain is ShK homolog Ask132958 (29 aa).

A ShKT domain is found at 1-29 (CENTISGCSRADCLLTHRKQGCQKTCGLC). Cystine bridges form between C1-C29, C8-C22, and C13-C26.

The protein belongs to the sea anemone type 1 potassium channel toxin family. Type 1a subfamily.

It localises to the secreted. The protein localises to the nematocyst. Functionally, this peptide is similar to the potassium channel toxin ShK, but does not show activity on potassium channels. It appears that Lys-19, which is expected to occupy the pore of the channel, is not sufficiently accessible for binding, and therefore that this peptide must have a distinct functional role that does not involve potassium channels. It is noteworthy that this peptide is much more stable in the presence of trypsin, chymotrypsin and pepsin than the toxin ShK. The protein is ShK homolog Ask132958 of Anemonia sulcata (Mediterranean snakelocks sea anemone).